The primary structure comprises 1369 residues: Phospholipase D1 (1369 aa).

Disordered stretches follow at residues 27–90 and 318–340; these read YSEK…SSWH and ESHS…GRKK. Positions 31–53 are enriched in basic and acidic residues; that stretch reads GTGRKDAEDHTPSKITDLEKNVD. The region spanning 208–379 is the PX domain; that stretch reads TDLIKVSVLD…NVLYSFLEFS (172 aa). 2 PLD phosphodiesterase domains span residues 641–668 and 941–968; these read LFWA…CFGR and EMIY…NERS. Over residues 1277–1289 the composition is skewed to basic and acidic residues; that stretch reads HETHEKSENDPKN. Positions 1277–1320 are disordered; sequence HETHEKSENDPKNPKAGSQGSGNTSASEDSKTEKPKTRTNNGLQ. Positions 1292–1303 are enriched in polar residues; it reads AGSQGSGNTSAS.

It belongs to the phospholipase D family.

The protein resides in the cytoplasm. It carries out the reaction a 1,2-diacyl-sn-glycero-3-phosphocholine + H2O = a 1,2-diacyl-sn-glycero-3-phosphate + choline + H(+). With respect to regulation, activity is slightly stimulated by oleate. Functionally, required for meiosis and spore formation. Seems to be involved in the coordinate induction of late meiotic events. The sequence is that of Phospholipase D1 (pld1) from Schizosaccharomyces pombe (strain 972 / ATCC 24843) (Fission yeast).